The following is a 146-amino-acid chain: Phospholipase A2, membrane associated (146 aa).

The N-terminal stretch at 1-21 is a signal peptide; sequence MKVLLLLAASIMAFGSIQVQG. Intrachain disulfides connect cysteine 47-cysteine 139, cysteine 49-cysteine 65, cysteine 64-cysteine 119, cysteine 70-cysteine 146, cysteine 71-cysteine 112, cysteine 80-cysteine 105, and cysteine 98-cysteine 110. Positions 48, 50, and 52 each coordinate Ca(2+). The active site involves histidine 68. Aspartate 69 is a binding site for Ca(2+). Aspartate 113 is an active-site residue.

The protein belongs to the phospholipase A2 family. Ca(2+) is required as a cofactor. As to expression, mainly in the Paneth cells adjacent to the stem population in the small intestines.

The protein resides in the secreted. Its subcellular location is the cell membrane. It localises to the mitochondrion outer membrane. It carries out the reaction a 1,2-diacyl-sn-glycero-3-phosphoethanolamine + H2O = a 1-acyl-sn-glycero-3-phosphoethanolamine + a fatty acid + H(+). The catalysed reaction is 1-hexadecanoyl-2-(9Z-octadecenoyl)-sn-glycero-3-phosphoethanolamine + H2O = 1-hexadecanoyl-sn-glycero-3-phosphoethanolamine + (9Z)-octadecenoate + H(+). The enzyme catalyses 1-hexadecanoyl-2-(9Z,12Z-octadecadienoyl)-sn-glycero-3-phosphoethanolamine + H2O = 1-hexadecanoyl-sn-glycero-3-phosphoethanolamine + (9Z,12Z)-octadecadienoate + H(+). It catalyses the reaction 1-hexadecanoyl-2-(5Z,8Z,11Z,14Z-eicosatetraenoyl)-sn-glycero-3-phosphoethanolamine + H2O = 1-hexadecanoyl-sn-glycero-3-phosphoethanolamine + (5Z,8Z,11Z,14Z)-eicosatetraenoate + H(+). It carries out the reaction N-hexadecanoyl-1,2-di-(9Z-octadecenoyl)-sn-glycero-3-phosphoethanolamine + H2O = N-hexadecanoyl-1-(9Z-octadecenoyl)-sn-glycero-3-phosphoethanolamine + (9Z)-octadecenoate + H(+). The catalysed reaction is 1,2-dihexadecanoyl-sn-glycero-3-phospho-(1'-sn-glycerol) + H2O = 1-hexadecanoyl-sn-glycero-3-phospho-(1'-sn-glycerol) + hexadecanoate + H(+). The enzyme catalyses 1-hexadecanoyl-2-(9Z-octadecenoyl)-sn-glycero-3-phosphoglycerol + H2O = 1-hexadecanoyl-sn-glycero-3-phosphoglycerol + (9Z)-octadecenoate + H(+). It catalyses the reaction 1-hexadecanoyl-2-(9Z-octadecenoyl)-sn-glycero-3-phospho-(1'-sn-glycerol) + H2O = 1-hexadecanoyl-sn-glycero-3-phospho-(1'-sn-glycerol) + (9Z)-octadecenoate + H(+). It carries out the reaction a 1,2-diacyl-sn-glycero-3-phosphocholine + H2O = a 1-acyl-sn-glycero-3-phosphocholine + a fatty acid + H(+). The catalysed reaction is 1,2-dihexadecanoyl-sn-glycero-3-phosphocholine + H2O = 1-hexadecanoyl-sn-glycero-3-phosphocholine + hexadecanoate + H(+). The enzyme catalyses 1-hexadecanoyl-2-(9Z-octadecenoyl)-sn-glycero-3-phosphocholine + H2O = 1-hexadecanoyl-sn-glycero-3-phosphocholine + (9Z)-octadecenoate + H(+). It catalyses the reaction 1-hexadecanoyl-2-(9Z,12Z-octadecadienoyl)-sn-glycero-3-phosphocholine + H2O = (9Z,12Z)-octadecadienoate + 1-hexadecanoyl-sn-glycero-3-phosphocholine + H(+). It carries out the reaction 1-hexadecanoyl-2-(4Z,7Z,10Z,13Z,16Z,19Z-docosahexaenoyl)-sn-glycero-3-phosphocholine + H2O = (4Z,7Z,10Z,13Z,16Z,19Z)-docosahexaenoate + 1-hexadecanoyl-sn-glycero-3-phosphocholine + H(+). Secretory calcium-dependent phospholipase A2 that primarily targets extracellular phospholipids with implications in host antimicrobial defense, inflammatory response and tissue regeneration. Hydrolyzes the ester bond of the fatty acyl group attached at sn-2 position of phospholipids (phospholipase A2 activity) with preference for phosphatidylethanolamines and phosphatidylglycerols over phosphatidylcholines. Contributes to lipid remodeling of cellular membranes and generation of lipid mediators involved in pathogen clearance. Displays bactericidal activity against Gram-positive bacteria by directly hydrolyzing phospholipids of the bacterial membrane. Upon sterile inflammation, targets membrane phospholipids of extracellular mitochondria released from activated platelets, generating free unsaturated fatty acids such as arachidonate that is used by neighboring leukocytes to synthesize inflammatory eicosanoids such as leukotrienes. Simultaneously, by compromising mitochondrial membrane integrity, promotes the release in circulation of potent damage-associated molecular pattern molecules that activate the innate immune response. Plays a stem cell regulator role in the intestinal crypt. Within intracellular compartment mediates Paneth cell differentiation and its stem cell supporting functions by inhibiting Wnt signaling pathway in intestinal stem cell (ICS). Secreted in the intestinal lumen upon inflammation, acts in an autocrine way and promotes prostaglandin E2 synthesis that stimulates Wnt signaling pathway in ICS cells and tissue regeneration. May play a role in the biosynthesis of N-acyl ethanolamines that regulate energy metabolism and inflammation. Hydrolyzes N-acyl phosphatidylethanolamines to N-acyl lysophosphatidylethanolamines, which are further cleaved by a lysophospholipase D to release N-acyl ethanolamines. Independent of its catalytic activity, acts as a ligand for integrins. Binds to and activates integrins ITGAV:ITGB3, ITGA4:ITGB1 and ITGA5:ITGB1. Binds to a site (site 2) which is distinct from the classical ligand-binding site (site 1) and induces integrin conformational changes and enhanced ligand binding to site 1. Induces cell proliferation in an integrin-dependent manner. This chain is Phospholipase A2, membrane associated (Pla2g2a), found in Mus musculus (Mouse).